The primary structure comprises 192 residues: I-Kappa-B like protein H1 (192 aa).

3 ANK repeats span residues 94 to 126, 131 to 161, and 165 to 192; these read KGAQCTHIIATSNVSCSIDMMNIVLQLGADING, AGLTPLHICVNKKNYALAEWLCQAPGIDVKV, and GKETPYDLACKMEDRKMMKIFEERSKKM.

This sequence belongs to the polydnaviridae I-Kappa-B-like protein family.

Functionally, suppresses the host immune response through NF-kappa-B inactivation. Possesses ankyrin repeat domains required for NF-kappa-B binding but lacks the regulatory regions required for dissociation from NF-kappa-B and degradation. Therefore, prevents host NF-kappa-B release and subsequent activation. The polypeptide is I-Kappa-B like protein H1 (H4) (Microplitis demolitor bracovirus (isolate Webb) (MdBV)).